Reading from the N-terminus, the 1010-residue chain is MQRNNGEGRPEGMHRISRFLHGNPFKNNASPQDDSTTRTEVYEEGGVEDSAVDYDNASGNAAPRLTAAPNTHAQQANLQSGNTSITHETQSTSRGQEATTSPSLSASHEKPARPQTGEGSDNEDEDEDIDALIEDLYSQDQEEEQVEEEESPGPAGAAKVVPEELLETDPKYGLTESEVEERKKKYGLNQMKEEKTNNIKKFLSFFVGPIQFVMELAAALAAGLRDWVDFGVICALLLLNATVGFVQEYQAGSIVDELKKTMALKASVLRDGRVKEIEASEIVPGDILHLDEGTICPADGRLITKDCFLQVDQSAITGESLAVDKHQNDTMYSSSTVKRGEAFMVVTATADSTFVGRAASLVGAAGQSQGHFTEVLNGIGTILLVLVILTLLCIYTAAFYRSVRLAALLEYTLAITIIGVPVGLPAVVTTTMAVGAAYLAKKKAIVQKLSAIESLAGVEILCSDKTGTLTKNRLSLGEPYCVEGVSPDDLMLTACLASSRKKKGLDAIDKAFLKALRNYPKAKDQLSKYKVLDFHPFDPVSKKITAYVEAPDGQRITCVKGAPLWVFKTVQDDHEVPEAITDAYREQVNDMASRGFRSLGVARKADGKQWEILGIMPCSDPPRHDTARTIHEAIGLGLRIKMLTGDAVGIAKETARQLGMGTNVYNAERLGLSGGGDMPGSEVNDFVEAADGFAEVFPQHKYAVVDILQQRGYLVAMTGDGVNDAPSLKKADAGIAVEGASDAARSAADIVFLAPGLSAIIDALKTSRQIFHRMYAYVVYRIALSLHLEIFLGLWLIIRNQLLNLELIVFIAIFADVATLAIAYDNAPYAMKPVKWNLPRLWGLATIVGILLAIGTWIVNTTMIAQGQNRGIVQNFGVQDEVLFLQISLTENWLIFITRCSGPFWSSFPSWQLSGAVLVVDILATLFCIFGWFKGGHQTSIVAVIRIWMYSFGIFCLIAGVYYILSESSSFDRWMHGKHKERGTTRKLEDFVMQLQRTSTHHEAEGKVTS.

Residues methionine 1–histidine 14 show a composition bias toward basic and acidic residues. 2 disordered regions span residues methionine 1–aspartate 126 and glutamine 139–leucine 165. Over methionine 1 to lysine 201 the chain is Cytoplasmic. The segment covering phenylalanine 25 to aspartate 34 has biased composition (polar residues). A compositionally biased stretch (acidic residues) spans tyrosine 42–valine 52. A compositionally biased stretch (polar residues) spans alanine 68 to alanine 106. A compositionally biased stretch (acidic residues) spans aspartate 140–serine 151. The helical transmembrane segment at phenylalanine 202–alanine 222 threads the bilayer. The Extracellular segment spans residues glycine 223–aspartate 226. The helical transmembrane segment at tryptophan 227 to valine 246 threads the bilayer. Over glutamine 247–asparagine 377 the chain is Cytoplasmic. The helical transmembrane segment at glycine 378–phenylalanine 399 threads the bilayer. Residues tyrosine 400–glutamate 410 are Extracellular-facing. A helical membrane pass occupies residues tyrosine 411 to alanine 433. The Cytoplasmic portion of the chain corresponds to valine 434–leucine 805. Catalysis depends on aspartate 464, which acts as the 4-aspartylphosphate intermediate. Mg(2+) is bound by residues aspartate 720 and aspartate 724. Residues glutamate 806 to tyrosine 824 form a helical membrane-spanning segment. At aspartate 825–arginine 840 the chain is on the extracellular side. Residues leucine 841–asparagine 860 traverse the membrane as a helical segment. Residues threonine 861–glutamine 912 lie on the Cytoplasmic side of the membrane. A helical transmembrane segment spans residues leucine 913–phenylalanine 933. Residues lysine 934 to arginine 946 are Extracellular-facing. Residues isoleucine 947–tyrosine 963 traverse the membrane as a helical segment. Topologically, residues isoleucine 964 to serine 1010 are cytoplasmic.

This sequence belongs to the cation transport ATPase (P-type) (TC 3.A.3) family. Type IIIA subfamily. In addition to transient phosphorylation of the active site Asp residue, this protein, but not the product of the pma1 locus, is phosphorylated efficiently in isolated plasma membrane.

The protein localises to the cell membrane. It catalyses the reaction ATP + H2O + H(+)(in) = ADP + phosphate + 2 H(+)(out). In terms of biological role, the plasma membrane ATPase of plants and fungi is a hydrogen ion pump. The proton gradient it generates drives the active transport of nutrients by H(+)-symport. The resulting external acidification and/or internal alkinization may mediate growth responses. This Schizosaccharomyces pombe (strain 972 / ATCC 24843) (Fission yeast) protein is Plasma membrane ATPase 2 (pma2).